Here is a 691-residue protein sequence, read N- to C-terminus: MSNEKQQWDDAYCLAEEMHDAGRPFKREELNIADQFICSRFSTIFEYDPYKDTYGFRNQELTHAIPVKSKCRHISDVDILELKKNTANADIRFPSYLNICPVYAMHPFTVLAFDLSKPVPMGMNASMENAAPNMKSPTEAEITPGTIYIFKHRDNKCYRCVILFEDGDNNVSDADRKYMVAFLDTPQVVSVKLKTLFHLGKFTIESYPCALYCCRAVGILEIRKDFGADLNGQINEFYKDKVKRKSGVHALIYKKDDRGDKLIFDCPSILGTSMTMALEIKDVIGHRSVAENDPTALSYDELVSKQLPTVDIDDHNSSVVLDLEESVIAQELGSTNGADCPCNNDNIDDFMQSQRQNPLDNNRDNWDRINESRSSMQSFAINQSQAITANPTPQPTFDESSGEVQTIPESINNLALNGRYLEDGRGTEEIREERSVESRQIGNQVVSQASCNYLEARQNSTQTANAESVCAIISESHAALPTDIQVIPSQHVLNENNHTVLPSVAPIIRNATGHSHIFGRQIPSPAFRRESLSSGNSIQVATFAATTGPCGSNTSRPTAQNTANSSINQDMSISNSSTNARLITIAQDNLNDTENWPNSEREQSATEMESGAEATTNSAVDEFAQVSDDMKGLADSMINFLRLTANSNNQDAFKANIFAMELISTKIPNQLTKRFFTLKIAEAKSLAEGFN.

The 66-residue stretch at 139–204 folds into the Tudor; degenerate domain; the sequence is EAEITPGTIY…TLFHLGKFTI (66 aa). Disordered stretches follow at residues 547–573 and 588–618; these read TGPC…DMSI and DNLN…TTNS. Polar residues-rich tracts occupy residues 549–573 and 588–598; these read PCGS…DMSI and DNLNDTENWPN.

It localises to the cytoplasm. Its subcellular location is the perinuclear region. Its function is as follows. Acts downstream of piRNA production to promote mediator complex-dependent endogenous siRNA biogenesis from piRNA-target mRNAs in the RNA interference pathway in germ cells. Not required to identify target mRNA by the piRNA pathway. Plays a role in both spermatogenesis and oogenesis and in maintaining fertility over multiple generations, probably by directing mutator-dependent silencing to piRNA-targeted genes. The protein is Protein simr-1 of Caenorhabditis elegans.